Here is a 577-residue protein sequence, read N- to C-terminus: DNA-directed RNA polymerase subunit alpha (577 aa).

The tract at residues 1-461 (MIKIIIKETF…QLFLPLQQIR (461 aa)) is alpha N-terminal domain (alpha-NTD). The segment at 510-577 (FDHRLLELDI…ALQLMKLTLK (68 aa)) is alpha C-terminal domain (alpha-CTD).

It belongs to the RNA polymerase alpha chain family. In plastids the minimal PEP RNA polymerase catalytic core is composed of four subunits: alpha, beta, beta', and beta''. When a (nuclear-encoded) sigma factor is associated with the core the holoenzyme is formed, which can initiate transcription.

It localises to the plastid. It is found in the chloroplast. The enzyme catalyses RNA(n) + a ribonucleoside 5'-triphosphate = RNA(n+1) + diphosphate. DNA-dependent RNA polymerase catalyzes the transcription of DNA into RNA using the four ribonucleoside triphosphates as substrates. This is DNA-directed RNA polymerase subunit alpha from Tupiella akineta (Green alga).